Here is a 223-residue protein sequence, read N- to C-terminus: Ribosomal RNA small subunit methyltransferase G (223 aa).

Residues G85, F90, and R154 each contribute to the S-adenosyl-L-methionine site.

This sequence belongs to the methyltransferase superfamily. RNA methyltransferase RsmG family.

The protein resides in the cytoplasm. The catalysed reaction is guanosine(527) in 16S rRNA + S-adenosyl-L-methionine = N(7)-methylguanosine(527) in 16S rRNA + S-adenosyl-L-homocysteine. In terms of biological role, specifically methylates the N7 position of guanine in position 527 of 16S rRNA. This chain is Ribosomal RNA small subunit methyltransferase G, found in Rhodopseudomonas palustris (strain ATCC BAA-98 / CGA009).